Consider the following 165-residue polypeptide: Large ribosomal subunit protein uL11 (165 aa).

It belongs to the universal ribosomal protein uL11 family.

In terms of biological role, binds directly to 26S ribosomal RNA. This chain is Large ribosomal subunit protein uL11 (rpl-12), found in Caenorhabditis briggsae.